Reading from the N-terminus, the 205-residue chain is GTP cyclohydrolase 1 (205 aa).

Zn(2+) is bound by residues Cys-94, His-97, and Cys-165.

The protein belongs to the GTP cyclohydrolase I family. In terms of assembly, homomer.

The enzyme catalyses GTP + H2O = 7,8-dihydroneopterin 3'-triphosphate + formate + H(+). It participates in cofactor biosynthesis; 7,8-dihydroneopterin triphosphate biosynthesis; 7,8-dihydroneopterin triphosphate from GTP: step 1/1. The chain is GTP cyclohydrolase 1 from Sinorhizobium fredii (strain NBRC 101917 / NGR234).